Consider the following 266-residue polypeptide: 5'-nucleotidase SurE (266 aa).

Residues Asp-8, Asp-9, Ser-40, and Asn-98 each contribute to the a divalent metal cation site.

Belongs to the SurE nucleotidase family. The cofactor is a divalent metal cation.

The protein localises to the cytoplasm. It carries out the reaction a ribonucleoside 5'-phosphate + H2O = a ribonucleoside + phosphate. Its function is as follows. Nucleotidase that shows phosphatase activity on nucleoside 5'-monophosphates. The protein is 5'-nucleotidase SurE of Parasynechococcus marenigrum (strain WH8102).